The chain runs to 401 residues: All trans-polyprenyl-diphosphate synthase PDSS2 (401 aa).

Belongs to the FPP/GGPP synthase family. In terms of assembly, heterotetramer composed of 2 PDSS1/DPS1 and 2 PDSS2/DLP1 subunits.

It is found in the mitochondrion. It carries out the reaction 7 isopentenyl diphosphate + (2E,6E)-farnesyl diphosphate = all-trans-decaprenyl diphosphate + 7 diphosphate. The enzyme catalyses 6 isopentenyl diphosphate + (2E,6E)-farnesyl diphosphate = all-trans-nonaprenyl diphosphate + 6 diphosphate. The protein operates within cofactor biosynthesis; ubiquinone biosynthesis. In terms of biological role, heterotetrameric enzyme that catalyzes the condensation of farnesyl diphosphate (FPP), which acts as a primer, and isopentenyl diphosphate (IPP) to produce prenyl diphosphates of varying chain lengths and participates in the determination of the side chain of ubiquinone. Supplies nona and decaprenyl diphosphate, the precursors for the side chain of the isoprenoid quinones ubiquinone-9 (Q9) and ubiquinone-10 (Q10) respectively. The enzyme adds isopentenyl diphosphate molecules sequentially to farnesyl diphosphate with trans stereochemistry. May play a role during cerebellar development. May regulate mitochondrial respiratory chain function. In Mus musculus (Mouse), this protein is All trans-polyprenyl-diphosphate synthase PDSS2.